Consider the following 244-residue polypeptide: Na(+)-translocating NADH-quinone reductase subunit E (244 aa).

6 helical membrane-spanning segments follow: residues 11–31 (LLGIFLQATFIQNILLSTFLG), 50–70 (MSVALVLTITGSINWLVHYFI), 90–110 (FLELIMFIVVIAAFTQILEVL), 123–143 (GIFLPLIAVNCAILGGVLFGI), 153–173 (VVFSLGSGCGWWLAIVLFATI), and 191–211 (ISFITTGLMAMAFMGLTGIDI). Residues 222–236 (VTNIATDSPQPNTHS) show a composition bias toward polar residues. Positions 222–244 (VTNIATDSPQPNTHSSSEEPKAS) are disordered.

This sequence belongs to the NqrDE/RnfAE family. In terms of assembly, composed of six subunits; NqrA, NqrB, NqrC, NqrD, NqrE and NqrF.

The protein localises to the cell inner membrane. The enzyme catalyses a ubiquinone + n Na(+)(in) + NADH + H(+) = a ubiquinol + n Na(+)(out) + NAD(+). Its function is as follows. NQR complex catalyzes the reduction of ubiquinone-1 to ubiquinol by two successive reactions, coupled with the transport of Na(+) ions from the cytoplasm to the periplasm. NqrA to NqrE are probably involved in the second step, the conversion of ubisemiquinone to ubiquinol. The polypeptide is Na(+)-translocating NADH-quinone reductase subunit E (Chlamydia trachomatis serovar A (strain ATCC VR-571B / DSM 19440 / HAR-13)).